We begin with the raw amino-acid sequence, 324 residues long: Beta-ketoacyl-[acyl-carrier-protein] synthase III (324 aa).

Catalysis depends on residues cysteine 112 and histidine 249. The segment at 250-254 (QANRR) is ACP-binding. Asparagine 279 is an active-site residue.

The protein belongs to the thiolase-like superfamily. FabH family. As to quaternary structure, homodimer.

It is found in the cytoplasm. It catalyses the reaction malonyl-[ACP] + acetyl-CoA + H(+) = 3-oxobutanoyl-[ACP] + CO2 + CoA. Its pathway is lipid metabolism; fatty acid biosynthesis. Catalyzes the condensation reaction of fatty acid synthesis by the addition to an acyl acceptor of two carbons from malonyl-ACP. Catalyzes the first condensation reaction which initiates fatty acid synthesis and may therefore play a role in governing the total rate of fatty acid production. Possesses both acetoacetyl-ACP synthase and acetyl transacylase activities. Its substrate specificity determines the biosynthesis of branched-chain and/or straight-chain of fatty acids. This is Beta-ketoacyl-[acyl-carrier-protein] synthase III from Streptococcus equi subsp. zooepidemicus (strain H70).